The chain runs to 193 residues: Holliday junction branch migration complex subunit RuvA (193 aa).

The domain I stretch occupies residues methionine 1–alanine 64. The domain II stretch occupies residues threonine 65–threonine 139. A flexible linker region spans residues threonine 139–proline 143. Residues glutamine 144–proline 193 are domain III.

Belongs to the RuvA family. In terms of assembly, homotetramer. Forms an RuvA(8)-RuvB(12)-Holliday junction (HJ) complex. HJ DNA is sandwiched between 2 RuvA tetramers; dsDNA enters through RuvA and exits via RuvB. An RuvB hexamer assembles on each DNA strand where it exits the tetramer. Each RuvB hexamer is contacted by two RuvA subunits (via domain III) on 2 adjacent RuvB subunits; this complex drives branch migration. In the full resolvosome a probable DNA-RuvA(4)-RuvB(12)-RuvC(2) complex forms which resolves the HJ.

It is found in the cytoplasm. Functionally, the RuvA-RuvB-RuvC complex processes Holliday junction (HJ) DNA during genetic recombination and DNA repair, while the RuvA-RuvB complex plays an important role in the rescue of blocked DNA replication forks via replication fork reversal (RFR). RuvA specifically binds to HJ cruciform DNA, conferring on it an open structure. The RuvB hexamer acts as an ATP-dependent pump, pulling dsDNA into and through the RuvAB complex. HJ branch migration allows RuvC to scan DNA until it finds its consensus sequence, where it cleaves and resolves the cruciform DNA. This is Holliday junction branch migration complex subunit RuvA from Polynucleobacter asymbioticus (strain DSM 18221 / CIP 109841 / QLW-P1DMWA-1) (Polynucleobacter necessarius subsp. asymbioticus).